Here is a 97-residue protein sequence, read N- to C-terminus: Mapk-regulated corepressor-interacting protein 1 (97 aa).

The disordered stretch occupies residues 1–30 (MTSSPVSRVVYNGKRTSSPRSPPSSSEIFT). Ser21 and Ser24 each carry phosphoserine. A Phosphothreonine modification is found at Thr30. Tyr41 carries the phosphotyrosine modification. Lys79 is modified (N6-acetyllysine). A PXDLS motif motif is present at residues 80 to 84 (PIDLS).

The protein belongs to the MCRIP family. As to quaternary structure, interacts (unphosphorylated form, via the PXDLS motif) with CTBP1, competitively inhibiting CTBP-ZEB1 interaction. Interacts with CTBP2. Interacts with MCRIP2. Interacts with DDX6. In terms of processing, phosphorylation by MAPK3/1 (ERK1/2) regulates MCRIP1 binding to CTBP(s).

The protein localises to the nucleus. It localises to the cytoplasm. The protein resides in the stress granule. Its function is as follows. The phosphorylation status of MCRIP1 functions as a molecular switch to regulate epithelial-mesenchymal transition. Unphosphorylated MCRIP1 binds to and inhibits the transcriptional corepressor CTBP(s). When phosphorylated by MAPK/ERK, MCRIP1 releases CTBP(s) resulting in transcriptional silencing of the E-cadherin gene and induction of epithelial-mesenchymal transition. The polypeptide is Mapk-regulated corepressor-interacting protein 1 (Homo sapiens (Human)).